A 1275-amino-acid chain; its full sequence is Inner capsid protein lambda-1 (1275 aa).

Residues 1–12 (MKRIPRKTRGKS) show a composition bias toward basic residues. Positions 1–147 (MKRIPRKTRG…NVDNEGGDNQ (147 aa)) are disordered. The span at 18 to 35 (DSTERADDGSAQLRDKQS) shows a compositional bias: basic and acidic residues. Over residues 55–66 (TRPSLQTVQKAT) the composition is skewed to polar residues. Composition is skewed to basic and acidic residues over residues 80 to 98 (AVDK…HVEA) and 105 to 117 (ATKR…DKQK). Residues 118 to 139 (AQVTYNDTGINNANELSRSGNV) show a composition bias toward polar residues. The segment at 181 to 203 (YQCHVCSAVLFSPLDLDAHVASH) adopts a C2H2-type zinc-finger fold.

It belongs to the turreted BTV-fold inner capsid family. In terms of assembly, homodecamer; each decamer is made up of two conformers of VP2, called VP2A and VP2B. 12 homodecamers assemble to form an icosahedral capsid. Interacts with protein mu-NS; in viral inclusions. It depends on Mg(2+) as a cofactor. Mn(2+) serves as cofactor.

It localises to the virion. The catalysed reaction is ATP + H2O = ADP + phosphate + H(+). Inner capsid protein that self-assembles to form an icosahedral capsid with a T=2 symmetry, which consists of 120 copies of VP2, with channels at each of its five-fold vertices. This capsid constitutes the innermost concentric layer of the viral mature particle. Its function is as follows. Displays NTPase, RNA 5'-triphosphatase (RTPase) and RNA helicase activities and probably participates in transcription of the viral genome. Helicase activity might be involved in unwinding or reannealing dsRNA during RNA synthesis. RTPase enzymatic activity represents the first step in RNA capping, which yields a 5'-diphosphorylated plus-strand RNA. This is Inner capsid protein lambda-1 from Reovirus type 2 (strain D5/Jones) (T2J).